Here is a 338-residue protein sequence, read N- to C-terminus: Anthranilate phosphoribosyltransferase (338 aa).

Residues Gly-81, 84–85, Ser-89, 91–94, 109–117, and Ser-121 contribute to the 5-phospho-alpha-D-ribose 1-diphosphate site; these read GD, NIST, and KHGNRSVSS. Gly-81 contacts anthranilate. Ser-93 lines the Mg(2+) pocket. Asn-112 contacts anthranilate. Position 167 (Arg-167) interacts with anthranilate. The Mg(2+) site is built by Asp-226 and Glu-227.

It belongs to the anthranilate phosphoribosyltransferase family. In terms of assembly, homodimer. The cofactor is Mg(2+).

It carries out the reaction N-(5-phospho-beta-D-ribosyl)anthranilate + diphosphate = 5-phospho-alpha-D-ribose 1-diphosphate + anthranilate. It functions in the pathway amino-acid biosynthesis; L-tryptophan biosynthesis; L-tryptophan from chorismate: step 2/5. Its function is as follows. Catalyzes the transfer of the phosphoribosyl group of 5-phosphorylribose-1-pyrophosphate (PRPP) to anthranilate to yield N-(5'-phosphoribosyl)-anthranilate (PRA). The polypeptide is Anthranilate phosphoribosyltransferase (Thioalkalivibrio sulfidiphilus (strain HL-EbGR7)).